We begin with the raw amino-acid sequence, 172 residues long: Co-chaperone protein HscB homolog (172 aa).

The 68-residue stretch at 2–69 (NHFELFNLPV…DSRAAYLLAL (68 aa)) folds into the J domain.

It belongs to the HscB family. Interacts with HscA and stimulates its ATPase activity.

Its function is as follows. Co-chaperone involved in the maturation of iron-sulfur cluster-containing proteins. Seems to help targeting proteins to be folded toward HscA. The protein is Co-chaperone protein HscB homolog of Acinetobacter baumannii (strain AB307-0294).